The sequence spans 320 residues: NAD-dependent protein deacylase SIR2rp2 (320 aa).

Residues 1–22 constitute a mitochondrion transit peptide; sequence MRPAGTLASFLERCSARKRGRG. Residues 23–320 form the Deacetylase sirtuin-type domain; that stretch reads CVVLTGAGCS…MFFRRKTIQL (298 aa). Residues 28-48 and 108-111 each bind NAD(+); these read GAGC…GQYH and QNVD. Catalysis depends on H144, which acts as the Proton acceptor. Zn(2+) contacts are provided by C152, C155, C207, and C210. NAD(+)-binding positions include 248 to 250, 274 to 276, and G294; these read GTS and NAG.

Belongs to the sirtuin family. Class II subfamily. Zn(2+) is required as a cofactor.

Its subcellular location is the mitochondrion matrix. It catalyses the reaction N(6)-acetyl-L-lysyl-[protein] + NAD(+) + H2O = 2''-O-acetyl-ADP-D-ribose + nicotinamide + L-lysyl-[protein]. In terms of biological role, NAD-dependent protein deacylase. Catalyzes the NAD-dependent hydrolysis of acyl groups from lysine residues. This chain is NAD-dependent protein deacylase SIR2rp2 (SIR2rp2), found in Leishmania major.